The sequence spans 294 residues: Bifunctional protein FolD (294 aa).

Residues 166 to 168 (GRS), serine 195, and isoleucine 236 each bind NADP(+).

Belongs to the tetrahydrofolate dehydrogenase/cyclohydrolase family. In terms of assembly, homodimer.

The catalysed reaction is (6R)-5,10-methylene-5,6,7,8-tetrahydrofolate + NADP(+) = (6R)-5,10-methenyltetrahydrofolate + NADPH. The enzyme catalyses (6R)-5,10-methenyltetrahydrofolate + H2O = (6R)-10-formyltetrahydrofolate + H(+). The protein operates within one-carbon metabolism; tetrahydrofolate interconversion. Catalyzes the oxidation of 5,10-methylenetetrahydrofolate to 5,10-methenyltetrahydrofolate and then the hydrolysis of 5,10-methenyltetrahydrofolate to 10-formyltetrahydrofolate. The protein is Bifunctional protein FolD of Chloroherpeton thalassium (strain ATCC 35110 / GB-78).